Reading from the N-terminus, the 37-residue chain is Potassium channel toxin alpha-KTx 1.3 (37 aa).

Q1 carries the post-translational modification Pyrrolidone carboxylic acid. Disulfide bonds link C7/C28, C13/C33, and C17/C35. Residues 26 to 33 (GKCMGKKC) are interaction with Ca(2+)-activated K(+) channels.

It belongs to the short scorpion toxin superfamily. Potassium channel inhibitor family. Alpha-KTx 01 subfamily. In terms of tissue distribution, expressed by the venom gland.

Its subcellular location is the secreted. Its function is as follows. Blocks selectively the high conductance calcium-activated (maxi-K) potassium channels (KCa1.1/KCNMA1). The chain is Potassium channel toxin alpha-KTx 1.3 from Hottentotta tamulus (Eastern Indian scorpion).